We begin with the raw amino-acid sequence, 225 residues long: PKHD-type hydroxylase YbiX (225 aa).

In terms of domain architecture, Fe2OG dioxygenase spans 78–177 (TLSTPLFNRY…RVASFMWIQS (100 aa)). Fe cation contacts are provided by H96, D98, and H158. 2-oxoglutarate is bound at residue R168.

Fe(2+) is required as a cofactor. The cofactor is L-ascorbate.

The sequence is that of PKHD-type hydroxylase YbiX from Escherichia coli O17:K52:H18 (strain UMN026 / ExPEC).